The primary structure comprises 577 residues: Monooxygenase PC-14 (577 aa).

Belongs to the FMO family. FAD serves as cofactor.

It functions in the pathway secondary metabolite biosynthesis. In terms of biological role, monooxygenase; part of the gene cluster that mediates the biosynthesis of the indole diterpenes penitrems. The geranylgeranyl diphosphate (GGPP) synthase penG catalyzes the first step in penitrem biosynthesis via conversion of farnesyl pyrophosphate and isopentyl pyrophosphate into geranylgeranyl pyrophosphate (GGPP). Condensation of indole-3-glycerol phosphate with GGPP by the prenyl transferase penC then forms 3-geranylgeranylindole (3-GGI). Epoxidation by the FAD-dependent monooxygenase penM leads to a epoxidized-GGI that is substrate of the terpene cyclase penB for cyclization to yield paspaline. Paspaline is subsequently converted to 13-desoxypaxilline by the cytochrome P450 monooxygenase penP, the latter being then converted to paxilline by the cytochrome P450 monooxygenase penQ. Paxilline is converted to beta-paxitriol via C-10 ketoreduction by the short-chain dehydrogenase PC-15 which can be monoprenylated at the C-20 by the indole diterpene prenyltransferase penD. A two-step elimination (acetylation and elimination) process performed by the O-acetyltransferase PC-16 and the P.simplicissimum ptmI-ortholog not yet identified in P.crustosum, leads to the production of the prenylated form of penijanthine. The FAD-linked oxidoreductase ptmO then converts the prenylated form of penijanthine into PC-M5 which is in turn transformed into PC-M4 by the aromatic dimethylallyltransferase PC-22. A series of oxidation steps involving 4 cytochrome P450 monooxygenases (PC-21, PC-05, PC-23, PC-20) and a FAD-dependent monooxygenase (PC-14) are required for the transformation of PC-M4 to penitrems A and E. Synthesis of these final products is proposed to proceed via penitrems D and C (PC-21, PC-05, PC-14) and penitrems B and F (PC-21, PC-05, PC-14, PC-23). The protein is Monooxygenase PC-14 of Penicillium crustosum (Blue mold fungus).